The sequence spans 405 residues: Acetate kinase (405 aa).

Asparagine 7 is a binding site for Mg(2+). Lysine 14 is a binding site for ATP. Arginine 91 is a substrate binding site. Aspartate 148 acts as the Proton donor/acceptor in catalysis. Residues 208-212 (HLGNG) and 283-285 (DFR) each bind ATP. A Mg(2+)-binding site is contributed by glutamate 384.

The protein belongs to the acetokinase family. Homodimer. Mg(2+) is required as a cofactor. Mn(2+) serves as cofactor.

It is found in the cytoplasm. The catalysed reaction is acetate + ATP = acetyl phosphate + ADP. Its pathway is metabolic intermediate biosynthesis; acetyl-CoA biosynthesis; acetyl-CoA from acetate: step 1/2. Functionally, catalyzes the formation of acetyl phosphate from acetate and ATP. Can also catalyze the reverse reaction. This is Acetate kinase from Dictyoglomus turgidum (strain DSM 6724 / Z-1310).